We begin with the raw amino-acid sequence, 501 residues long: Lysine--tRNA ligase (501 aa).

The Mg(2+) site is built by Glu411 and Glu418.

This sequence belongs to the class-II aminoacyl-tRNA synthetase family. In terms of assembly, homodimer. The cofactor is Mg(2+).

The protein localises to the cytoplasm. It carries out the reaction tRNA(Lys) + L-lysine + ATP = L-lysyl-tRNA(Lys) + AMP + diphosphate. This Pseudomonas aeruginosa (strain ATCC 15692 / DSM 22644 / CIP 104116 / JCM 14847 / LMG 12228 / 1C / PRS 101 / PAO1) protein is Lysine--tRNA ligase.